The primary structure comprises 234 residues: MNNQLIYTGKAKDIYSTKDENVIRTVYKDQATMLNGARKETIDGKGALNNQISSLIFEKLNMAGVVTHYIEQISKNEQLNKKVDIIPLEVVLRNVTAGSFSKRFGVEEGRVLETPIVEFYYKNDDLNDPFINDEHMKFLGIVNDEEIAYLKGETRRINELLKDWFAQIGLNLIDFKLEFGFDKDGKIILADEFSPDNCRLWDAEGNHMDKDVFRRDLGSLTDVYQVVLEKLIAL.

Belongs to the SAICAR synthetase family.

The catalysed reaction is 5-amino-1-(5-phospho-D-ribosyl)imidazole-4-carboxylate + L-aspartate + ATP = (2S)-2-[5-amino-1-(5-phospho-beta-D-ribosyl)imidazole-4-carboxamido]succinate + ADP + phosphate + 2 H(+). The protein operates within purine metabolism; IMP biosynthesis via de novo pathway; 5-amino-1-(5-phospho-D-ribosyl)imidazole-4-carboxamide from 5-amino-1-(5-phospho-D-ribosyl)imidazole-4-carboxylate: step 1/2. This Streptococcus agalactiae serotype III (strain NEM316) protein is Phosphoribosylaminoimidazole-succinocarboxamide synthase.